A 54-amino-acid polypeptide reads, in one-letter code: uncharacterized protein (54 aa).

Residues 1–28 (MDRKKDEIQRKYREQMREKKEREKEDGS) show a composition bias toward basic and acidic residues. The segment at 1-29 (MDRKKDEIQRKYREQMREKKEREKEDGSS) is disordered. Residues 31–51 (TFEIVVVLAIIILMFFFNSVF) form a helical membrane-spanning segment.

The protein resides in the cell membrane. This is an uncharacterized protein from Bacillus subtilis (strain 168).